Consider the following 435-residue polypeptide: Serine hydroxymethyltransferase (435 aa).

Residues Leu131 and 135-137 (GHL) each bind (6S)-5,6,7,8-tetrahydrofolate. N6-(pyridoxal phosphate)lysine is present on Lys240.

The protein belongs to the SHMT family. As to quaternary structure, homodimer. Requires pyridoxal 5'-phosphate as cofactor.

It localises to the cytoplasm. The catalysed reaction is (6R)-5,10-methylene-5,6,7,8-tetrahydrofolate + glycine + H2O = (6S)-5,6,7,8-tetrahydrofolate + L-serine. The protein operates within one-carbon metabolism; tetrahydrofolate interconversion. It participates in amino-acid biosynthesis; glycine biosynthesis; glycine from L-serine: step 1/1. In terms of biological role, catalyzes the reversible interconversion of serine and glycine with tetrahydrofolate (THF) serving as the one-carbon carrier. This reaction serves as the major source of one-carbon groups required for the biosynthesis of purines, thymidylate, methionine, and other important biomolecules. Also exhibits THF-independent aldolase activity toward beta-hydroxyamino acids, producing glycine and aldehydes, via a retro-aldol mechanism. This chain is Serine hydroxymethyltransferase, found in Bifidobacterium longum subsp. infantis (strain ATCC 15697 / DSM 20088 / JCM 1222 / NCTC 11817 / S12).